The primary structure comprises 898 residues: Transportin-1 (898 aa).

HEAT repeat units lie at residues 19–46, 51–89, 98–131, 137–174, 181–211, 224–251, 263–290, 306–397, 405–433, 445–472, 486–519, 527–560, 568–606, 614–665, 676–707, 715–748, 756–791, 799–832, 841–872, and 875–895; these read GLQQ…QKLE, YPDF…AHFQ, FIKS…KGEL, LLPK…LDSD, NIMI…QFII, FIEN…VMLL, HNIV…FWLT, PKLI…LANV, HILP…GAIA, PELI…TLSR, LKPL…EEEA, LAYI…ADSV, EYIQ…TALQ, EPVY…GLGG, ILTL…KACF, ADFM…IQMG, PMVL…YVCP, QQFI…ISVN, IFFC…KNQV, and ENWR…LAAF. Positions 41-109 constitute an Importin N-terminal domain; it reads VQQKLEQLNQ…KSECLNNIGD (69 aa). The tract at residues 347-374 is disordered; it reads FHRSRTVAQQHEEDGIEEEDDDDDEIDD. Acidic residues predominate over residues 360 to 374; sequence DGIEEEDDDDDEIDD.

The protein belongs to the importin beta family. Importin beta-2 subfamily. Identified in a complex that contains TNPO1, RAN and RANBP1. Binds HNRPA1, HNRPA2, HNRNPDL, RPS7, RPL5 and RAN. Interacts with H2A, H2B, H3 and H4 histones. Interacts with isoform 1 and isoform 5 of ADAR/ADAR1 (via DRBM 3 domain). Interacts with SNAI1 (via zinc fingers); the interaction mediates SNAI1 nuclear import. Interacts with SNAI2 (via zinc fingers). Interacts with RPL23A (via BIB domain) and SRP19; this interaction is involved in RPL23A and SRP19 import into the nucleus. Interacts (via HEAT repeats 8-12) with BAP1 (via non-classical PY-NLS); this interaction is direct, is involved in BAP1 nuclear import and disrupts BAP1 homodimerization.

The protein localises to the cytoplasm. Its subcellular location is the nucleus. Functions in nuclear protein import as nuclear transport receptor. Serves as receptor for nuclear localization signals (NLS) in cargo substrates. May mediate docking of the importin/substrate complex to the nuclear pore complex (NPC) through binding to nucleoporin and the complex is subsequently translocated through the pore by an energy requiring, Ran-dependent mechanism. At the nucleoplasmic side of the NPC, Ran binds to the importin, the importin/substrate complex dissociates and importin is re-exported from the nucleus to the cytoplasm where GTP hydrolysis releases Ran. The directionality of nuclear import is thought to be conferred by an asymmetric distribution of the GTP- and GDP-bound forms of Ran between the cytoplasm and nucleus. Involved in nuclear import of M9-containing proteins. In vitro, binds directly to the M9 region of the heterogeneous nuclear ribonucleoproteins (hnRNP), A1 and A2 and mediates their nuclear import. Involved in hnRNP A1/A2 nuclear export. Mediates the nuclear import of ribosomal proteins RPL23A, RPS7 and RPL5. In vitro, mediates nuclear import of SRP19. Mediates the import of histones H2A, H2B, H3 and H4. Mediates nuclear import of ADAR/ADAR1 in a RanGTP-dependent manner. Main mediator of PR-DUB complex component BAP1 nuclear import; acts redundantly with the karyopherins KPNA1 and KPNA2. This Mus musculus (Mouse) protein is Transportin-1 (Tnpo1).